Consider the following 219-residue polypeptide: Cytidylate kinase (219 aa).

21–29 contacts ATP; it reads GPAASGKGT.

This sequence belongs to the cytidylate kinase family. Type 1 subfamily.

It localises to the cytoplasm. The catalysed reaction is CMP + ATP = CDP + ADP. The enzyme catalyses dCMP + ATP = dCDP + ADP. The protein is Cytidylate kinase of Rickettsia conorii (strain ATCC VR-613 / Malish 7).